Reading from the N-terminus, the 505-residue chain is Flagellin (505 aa).

It belongs to the bacterial flagellin family.

The protein resides in the secreted. It localises to the bacterial flagellum. Flagellin is the subunit protein which polymerizes to form the filaments of bacterial flagella. This Salmonella enteritidis protein is Flagellin (fliC).